A 158-amino-acid polypeptide reads, in one-letter code: Large ribosomal subunit protein bL17 (158 aa).

Positions 119 to 158 (APAAAPEAEEKGEKKAAKAPKAEKAPKAEKKPAKKAAKAE) are disordered. Positions 126–158 (AEEKGEKKAAKAPKAEKAPKAEKKPAKKAAKAE) are enriched in basic and acidic residues.

Belongs to the bacterial ribosomal protein bL17 family. Part of the 50S ribosomal subunit. Contacts protein L32.

In Anaeromyxobacter sp. (strain K), this protein is Large ribosomal subunit protein bL17.